A 107-amino-acid chain; its full sequence is Nucleoid-associated protein CE0210 (107 aa).

Belongs to the YbaB/EbfC family. In terms of assembly, homodimer.

It localises to the cytoplasm. The protein localises to the nucleoid. Binds to DNA and alters its conformation. May be involved in regulation of gene expression, nucleoid organization and DNA protection. This Corynebacterium efficiens (strain DSM 44549 / YS-314 / AJ 12310 / JCM 11189 / NBRC 100395) protein is Nucleoid-associated protein CE0210.